The chain runs to 510 residues: NAD(P)H-quinone oxidoreductase subunit 2 A, chloroplastic (510 aa).

14 helical membrane passes run 31–51 (FIFP…IDLT), 59–79 (WFYF…LFRW), 99–119 (IFQF…VEYI), 124–144 (MAIT…MFLC), 149–169 (LITI…LSGY), 184–204 (LLMG…LYGL), 229–249 (ISIA…LAPF), 261–281 (PTPV…ALAT), 295–315 (WHLL…LLAI), 323–343 (MLAY…IVGD), 354–374 (YMLF…LFGL), 395–415 (ALSL…AGFF), 418–438 (LYLF…IGLL), and 484–504 (MTVC…ILAI).

The protein belongs to the complex I subunit 2 family. In terms of assembly, NDH is composed of at least 16 different subunits, 5 of which are encoded in the nucleus.

It is found in the plastid. Its subcellular location is the chloroplast thylakoid membrane. It catalyses the reaction a plastoquinone + NADH + (n+1) H(+)(in) = a plastoquinol + NAD(+) + n H(+)(out). The catalysed reaction is a plastoquinone + NADPH + (n+1) H(+)(in) = a plastoquinol + NADP(+) + n H(+)(out). Its function is as follows. NDH shuttles electrons from NAD(P)H:plastoquinone, via FMN and iron-sulfur (Fe-S) centers, to quinones in the photosynthetic chain and possibly in a chloroplast respiratory chain. The immediate electron acceptor for the enzyme in this species is believed to be plastoquinone. Couples the redox reaction to proton translocation, and thus conserves the redox energy in a proton gradient. The chain is NAD(P)H-quinone oxidoreductase subunit 2 A, chloroplastic from Saccharum hybrid (Sugarcane).